Consider the following 426-residue polypeptide: Elongation factor 1-alpha (426 aa).

The tr-type G domain occupies 5–221 (KPHMNLAVIG…DTFKEPDKPT (217 aa)). The G1 stretch occupies residues 14 to 21 (GHIDHGKS). 14-21 (GHIDHGKS) provides a ligand contact to GTP. Position 21 (Ser-21) interacts with Mg(2+). A G2 region spans residues 70–74 (GITID). Residues 91–94 (DCPG) are G3. GTP-binding positions include 91–95 (DCPGH) and 146–149 (NKMD). Residues 146-149 (NKMD) are G4. Residues 185-187 (SSF) are G5.

The protein belongs to the TRAFAC class translation factor GTPase superfamily. Classic translation factor GTPase family. EF-Tu/EF-1A subfamily.

The protein localises to the cytoplasm. It catalyses the reaction GTP + H2O = GDP + phosphate + H(+). In terms of biological role, GTP hydrolase that promotes the GTP-dependent binding of aminoacyl-tRNA to the A-site of ribosomes during protein biosynthesis. The chain is Elongation factor 1-alpha from Methanosphaerula palustris (strain ATCC BAA-1556 / DSM 19958 / E1-9c).